A 1053-amino-acid chain; its full sequence is Translation initiation factor IF-2 (1053 aa).

The segment covering 1–20 (MSESKNSGENTLSVTPTKTL) has biased composition (polar residues). The disordered stretch occupies residues 1–442 (MSESKNSGEN…TATGGEEEER (442 aa)). Low complexity-rich tracts occupy residues 64–76 (EAAP…ATVT) and 83–102 (RPAA…AAVP). Pro residues-rich tracts occupy residues 131–141 (PAQPKAEPVPA) and 150–161 (APVPPVPAPSAP). Residues 178–220 (PVSQAKPIQTAPVQTAPAAQASASQTTGPRPVAAGPRPATGAA) show a composition bias toward low complexity. Over residues 255–264 (GGRGGPGRGE) the composition is skewed to gly residues. Basic and acidic residues-rich tracts occupy residues 279–288 (LTDEEREARA) and 295–353 (RIRE…EAKR). Low complexity predominate over residues 375-386 (TATAAAPAAAAP). A tr-type G domain is found at 550–720 (PRPPVVTIMG…ALQAELLDLK (171 aa)). Residues 559-566 (GHVDHGKT) are G1. 559–566 (GHVDHGKT) lines the GTP pocket. Residues 584-588 (GITQH) are G2. The segment at 606-609 (DTPG) is G3. GTP contacts are provided by residues 606 to 610 (DTPGH) and 660 to 663 (NKID). A G4 region spans residues 660 to 663 (NKID). The segment at 696-698 (SAT) is G5.

This sequence belongs to the TRAFAC class translation factor GTPase superfamily. Classic translation factor GTPase family. IF-2 subfamily.

The protein resides in the cytoplasm. In terms of biological role, one of the essential components for the initiation of protein synthesis. Protects formylmethionyl-tRNA from spontaneous hydrolysis and promotes its binding to the 30S ribosomal subunits. Also involved in the hydrolysis of GTP during the formation of the 70S ribosomal complex. The sequence is that of Translation initiation factor IF-2 from Beijerinckia indica subsp. indica (strain ATCC 9039 / DSM 1715 / NCIMB 8712).